Reading from the N-terminus, the 446-residue chain is NADH oxidase (446 aa).

FAD contacts are provided by residues 7–11 (GCTHA), glutamate 32, cysteine 42, valine 79, 110–113 (TTGS), lysine 132, and tyrosine 157. Histidine 10 (proton acceptor) is an active-site residue. Cysteine 42 functions as the Redox-active in the catalytic mechanism. At cysteine 42 the chain carries Cysteine sulfinic acid (-SO2H). NAD(+) is bound by residues 150 to 165 (VVVV…LVEA), aspartate 177, tyrosine 186, and glycine 243. FAD is bound by residues 271 to 281 (TSNPDIFAAGD), leucine 298, alanine 299, and threonine 300. Glycine 328 lines the NAD(+) pocket. Phenylalanine 424 provides a ligand contact to FAD.

It belongs to the class-III pyridine nucleotide-disulfide oxidoreductase family. In terms of assembly, homodimer. It depends on FAD as a cofactor. The N-terminus is blocked.

It catalyses the reaction 2 NADH + O2 + 2 H(+) = 2 NAD(+) + 2 H2O. Functionally, catalyzes the four-electron reduction of molecular oxygen to water. The chain is NADH oxidase (nox) from Enterococcus faecalis (strain ATCC 700802 / V583).